The chain runs to 322 residues: Ribonucleoside-diphosphate reductase subunit beta nrdF1 (322 aa).

Fe cation is bound by residues Asp70, Glu101, and His104. Residue Tyr108 is part of the active site. Residues Glu161, Glu195, and His198 each coordinate Fe cation.

The protein belongs to the ribonucleoside diphosphate reductase small chain family. As to quaternary structure, tetramer of two alpha and two beta subunits. Fe cation serves as cofactor.

It catalyses the reaction a 2'-deoxyribonucleoside 5'-diphosphate + [thioredoxin]-disulfide + H2O = a ribonucleoside 5'-diphosphate + [thioredoxin]-dithiol. Its function is as follows. Provides the precursors necessary for DNA synthesis. Catalyzes the biosynthesis of deoxyribonucleotides from the corresponding ribonucleotides. This Mycobacterium tuberculosis (strain CDC 1551 / Oshkosh) protein is Ribonucleoside-diphosphate reductase subunit beta nrdF1 (nrdF1).